The chain runs to 662 residues: uncharacterized protein (662 aa).

Residues Ser-145, Glu-164, Trp-173, Asp-184, and Tyr-190 each contribute to the FAD site. Residues 638–662 (SRLETSGVPREGVQRPGSRLRRRPS) form a disordered region.

The protein belongs to the FAD-binding monooxygenase family. FAD is required as a cofactor.

This is an uncharacterized protein from Sinorhizobium fredii (strain NBRC 101917 / NGR234).